A 69-amino-acid chain; its full sequence is uncharacterized protein (69 aa).

A disordered region spans residues leucine 22 to methionine 48. The segment covering threonine 37–methionine 48 has biased composition (pro residues).

This is an uncharacterized protein from Lepidoptera (butterflies and moths).